Reading from the N-terminus, the 279-residue chain is uncharacterized protein (279 aa).

Transmembrane regions (helical) follow at residues 29-49, 77-97, 105-125, 147-167, 186-206, and 240-260; these read PYNMIAGAIGAVVLTILALVF, VLYALAPLIPLVILVIGGTSL, WTKMGVPQAMLIGAIYGIIVT, VLGIIIAASVFVAGLKSTGAV, TIGPFLMGLITGSGDAAAIAF, and PIAGVTIVCAGLAMVSPVEMV.

It belongs to the DcuC/DcuD transporter (TC 2.A.61) family.

It localises to the cell membrane. This is an uncharacterized protein from Haemophilus influenzae (strain ATCC 51907 / DSM 11121 / KW20 / Rd).